Here is a 386-residue protein sequence, read N- to C-terminus: Enamidase (386 aa).

Zn(2+) is bound by residues H67, H69, and E164. E164, H193, and H220 together coordinate Fe cation. D276 serves as a coordination point for Zn(2+).

Homotetramer. Dimer of dimers. It depends on Fe cation as a cofactor. Zn(2+) is required as a cofactor.

It carries out the reaction 1,4,5,6-tetrahydro-6-oxonicotinate + 2 H2O = 2-formylglutarate + NH4(+). Its pathway is cofactor degradation; nicotinate degradation; propanoate and pyruvate from 6-hydroxynicotinate: step 2/8. In terms of biological role, decyclization of 6-oxo-1,4,5,6-tetrahydronicotinate to form 2-(enamine)glutarate, followed by hydrolysis to form (S)-2-formylglutarate. This is Enamidase from Eubacterium barkeri (Clostridium barkeri).